The sequence spans 603 residues: Pyruvate decarboxylase 4 (603 aa).

Substrate-binding residues include Asp-65 and His-152. Positions 430 to 512 (DSWFNCQKLK…FLINNGGYTI (83 aa)) are thiamine pyrophosphate binding. 3 residues coordinate Mg(2+): Asp-480, Asn-507, and Gly-509. Glu-513 provides a ligand contact to substrate.

This sequence belongs to the TPP enzyme family. As to quaternary structure, homotetramer. Requires a metal cation as cofactor. Thiamine diphosphate serves as cofactor. Expressed in shoots and at lowe levels in roots, flowers and siliques.

The enzyme catalyses a 2-oxocarboxylate + H(+) = an aldehyde + CO2. This chain is Pyruvate decarboxylase 4 (PDC4), found in Arabidopsis thaliana (Mouse-ear cress).